A 405-amino-acid chain; its full sequence is uncharacterized protein (405 aa).

It belongs to the UDP-glycosyltransferase family.

This is an uncharacterized protein from Bacillus subtilis (strain 168).